We begin with the raw amino-acid sequence, 214 residues long: UPF0502 protein Pput_3252 (214 aa).

This sequence belongs to the UPF0502 family.

The chain is UPF0502 protein Pput_3252 from Pseudomonas putida (strain ATCC 700007 / DSM 6899 / JCM 31910 / BCRC 17059 / LMG 24140 / F1).